Here is a 241-residue protein sequence, read N- to C-terminus: Beta-nerve growth factor (241 aa).

An N-terminal signal peptide occupies residues 1–18; the sequence is MSMLFYTLITALLIGVQA. Positions 19-121 are excised as a propeptide; sequence EPYTDSNLPE…SFNRTHRSKR (103 aa). Asn-69, Asn-114, and Asn-166 each carry an N-linked (GlcNAc...) asparagine glycan. 3 cysteine pairs are disulfide-bonded: Cys-136–Cys-201, Cys-179–Cys-229, and Cys-189–Cys-231.

The protein belongs to the NGF-beta family. In terms of assembly, homodimer. The homodimer interacts with a single NTRK1 chain. The homodimer interacts with a single NGFR chain. The NGF dimer interacts with a single SORCS2 chain (via extracellular domain). The NGF precursor (proNGF) binds to a receptor complex formed by SORT1 and NGFR, which leads to NGF endocytosis. Both mature NGF and the immature NGF precursor (proNGF) interact with SORCS2 and with the heterodimer formed by SORCS2 and NGFR (via extracellular domains). The NGF precursor (proNGF) has much higher affinity for SORCS2 than mature NGF. The NGF precursor (proNGF) has much higher affinity for SORT1 than mature NGF. Interacts with ADAM10 in a divalent cation-dependent manner. Interacts with SORCS3.

The protein resides in the secreted. It is found in the endosome lumen. In terms of biological role, nerve growth factor is important for the development and maintenance of the sympathetic and sensory nervous systems. Extracellular ligand for the NTRK1 and NGFR receptors, activates cellular signaling cascades through those receptor tyrosine kinase to regulate neuronal proliferation, differentiation and survival. Inhibits metalloproteinase dependent proteolysis of platelet glycoprotein VI. The sequence is that of Beta-nerve growth factor (NGF) from Mastomys natalensis (African soft-furred rat).